A 598-amino-acid polypeptide reads, in one-letter code: Elongation factor 4 (598 aa).

The 183-residue stretch at 4–186 (SHIRNFAIIA…AIVSRLPAPS (183 aa)) folds into the tr-type G domain. Residues 16-21 (DHGKST) and 133-136 (NKID) each bind GTP.

It belongs to the TRAFAC class translation factor GTPase superfamily. Classic translation factor GTPase family. LepA subfamily.

Its subcellular location is the cell inner membrane. It catalyses the reaction GTP + H2O = GDP + phosphate + H(+). Functionally, required for accurate and efficient protein synthesis under certain stress conditions. May act as a fidelity factor of the translation reaction, by catalyzing a one-codon backward translocation of tRNAs on improperly translocated ribosomes. Back-translocation proceeds from a post-translocation (POST) complex to a pre-translocation (PRE) complex, thus giving elongation factor G a second chance to translocate the tRNAs correctly. Binds to ribosomes in a GTP-dependent manner. This is Elongation factor 4 from Ehrlichia chaffeensis (strain ATCC CRL-10679 / Arkansas).